The chain runs to 436 residues: T-box transcription factor TBX6 (436 aa).

The segment at residues 100–273 is a DNA-binding region (T-box); that stretch reads LWKEFSSVGT…ANPFAKGFRE (174 aa). Over residues 271 to 284 the composition is skewed to basic and acidic residues; sequence FRENGRNCKRERDA. Disordered regions lie at residues 271–339 and 360–379; these read FREN…APAP and PSHL…SGRS. The segment covering 325-339 has biased composition (low complexity); the sequence is EQAPAPGEATAAPAP.

In terms of assembly, forms a dimeric complex with DNA (in vitro). In terms of tissue distribution, expressed in fetal tail bud, posterior spinal tissue, intervertebral disk and testis. Also expressed in adult testis, kidney, lung, muscle and thymus.

The protein localises to the nucleus. In terms of biological role, T-box transcription factor that plays an essential role in the determination of the fate of axial stem cells: neural vs mesodermal. Acts in part by down-regulating, a specific enhancer (N1) of SOX2, to inhibit neural development. Seems to play also an essential role in left/right axis determination and acts through effects on Notch signaling around the node as well as through an effect on the morphology and motility of the nodal cilia. In Homo sapiens (Human), this protein is T-box transcription factor TBX6 (TBX6).